Reading from the N-terminus, the 344-residue chain is Biotin synthase (344 aa).

In terms of domain architecture, Radical SAM core spans 65–290 (PEVEVEGIIS…RTMLRFAGGR (226 aa)). 3 residues coordinate [4Fe-4S] cluster: Cys80, Cys84, and Cys87. [2Fe-2S] cluster-binding residues include Cys123, Cys156, Cys215, and Arg285.

This sequence belongs to the radical SAM superfamily. Biotin synthase family. Homodimer. Requires [4Fe-4S] cluster as cofactor. It depends on [2Fe-2S] cluster as a cofactor.

The enzyme catalyses (4R,5S)-dethiobiotin + (sulfur carrier)-SH + 2 reduced [2Fe-2S]-[ferredoxin] + 2 S-adenosyl-L-methionine = (sulfur carrier)-H + biotin + 2 5'-deoxyadenosine + 2 L-methionine + 2 oxidized [2Fe-2S]-[ferredoxin]. The protein operates within cofactor biosynthesis; biotin biosynthesis; biotin from 7,8-diaminononanoate: step 2/2. Catalyzes the conversion of dethiobiotin (DTB) to biotin by the insertion of a sulfur atom into dethiobiotin via a radical-based mechanism. The protein is Biotin synthase of Mycolicibacterium paratuberculosis (strain ATCC BAA-968 / K-10) (Mycobacterium paratuberculosis).